A 135-amino-acid chain; its full sequence is Protein NrdI (135 aa).

Belongs to the NrdI family.

Its function is as follows. Probably involved in ribonucleotide reductase function. This is Protein NrdI from Pectobacterium carotovorum subsp. carotovorum (strain PC1).